We begin with the raw amino-acid sequence, 272 residues long: Large ribosomal subunit protein uL2cz/uL2cy (272 aa).

Polar residues predominate over residues 1–13; it reads MHLYKTSTPSTRN. Disordered regions lie at residues 1–27 and 222–272; these read MHLY…PRNN and NPVD…RRSK.

It belongs to the universal ribosomal protein uL2 family. In terms of assembly, part of the 50S ribosomal subunit.

Its subcellular location is the plastid. It localises to the chloroplast. The protein is Large ribosomal subunit protein uL2cz/uL2cy (rpl2-A) of Buxus microphylla (Littleleaf boxwood).